The chain runs to 583 residues: MDRNSVTGLALIALIMIVWLQFMSPDKKSVQPDNRPKAQTTATVSQEKTEAPAALRSDTFGVFAEASTGAEELVTVDNELFTMTLSSKGATIKSVVLKNHLDGQLKPFDLVSSHDKGALSLLFLNVEGKKIDTRELYFRLVSQEKKQTLSGKKIAVVRYRLDINPQQAIDIVYRFSGNSYKVDYDVKLTGFDNALAGNEYQLQWDGGLAYSEKNREDESHNALAGAFLGGSLVKIDASKENQTYREEQSGEAGWVAVRNKYFVAALIPGSKTEGIYLEGKKGSGHFEEYLASLKMSVPSTEKVASNHFSLYIGPLDYNTVKTLDANLEKIMDFGWDWLTRPFAEYVILPVFTWMNGFISNYGLIIIIFALLIKLVTYPLSMASTKSMKKMAALQPMLKELQEKYKDNPAKLQSELGRIYKEAGVNPLGGCLPVVLQMPLLFAMFYVFRSSIQLRHHGFLWAKDLSVPDSILDFGFSIPVYGDHIAVFPILMGVTVFIQQKITPTTQSNDQMKMMLYIFPVTMLLFFNNLPAGLGLYYLMFNVFSVAQQFYINSTTSTDDVPKAALEAASAAVASKKKKGSSKK.

The chain crosses the membrane as a helical span at residues 5–25 (SVTGLALIALIMIVWLQFMSP). The tract at residues 28–50 (KSVQPDNRPKAQTTATVSQEKTE) is disordered. The span at 37-46 (KAQTTATVSQ) shows a compositional bias: polar residues. 5 consecutive transmembrane segments (helical) span residues 341–361 (PFAE…ISNY), 362–382 (GLII…LSMA), 427–447 (LGGC…FYVF), 477–497 (IPVY…TVFI), and 515–535 (LYIF…GLGL).

The protein belongs to the OXA1/ALB3/YidC family. Type 1 subfamily. As to quaternary structure, interacts with the Sec translocase complex via SecD. Specifically interacts with transmembrane segments of nascent integral membrane proteins during membrane integration.

The protein resides in the cell inner membrane. In terms of biological role, required for the insertion and/or proper folding and/or complex formation of integral membrane proteins into the membrane. Involved in integration of membrane proteins that insert both dependently and independently of the Sec translocase complex, as well as at least some lipoproteins. Aids folding of multispanning membrane proteins. This Chlorobium limicola (strain DSM 245 / NBRC 103803 / 6330) protein is Membrane protein insertase YidC.